A 497-amino-acid chain; its full sequence is UDP-N-acetylmuramoyl-L-alanyl-D-glutamate--2,6-diaminopimelate ligase (497 aa).

S32 lines the UDP-N-acetyl-alpha-D-muramoyl-L-alanyl-D-glutamate pocket. An ATP-binding site is contributed by 113–119 (GTNGKTT). Residues 155 to 156 (TT), S182, Q188, and R190 each bind UDP-N-acetyl-alpha-D-muramoyl-L-alanyl-D-glutamate. K222 is modified (N6-carboxylysine). Meso-2,6-diaminopimelate is bound by residues R385, 409 to 412 (DNPR), G460, and E464. Residues 409–412 (DNPR) carry the Meso-diaminopimelate recognition motif motif.

It belongs to the MurCDEF family. MurE subfamily. The cofactor is Mg(2+). Post-translationally, carboxylation is probably crucial for Mg(2+) binding and, consequently, for the gamma-phosphate positioning of ATP.

The protein resides in the cytoplasm. The enzyme catalyses UDP-N-acetyl-alpha-D-muramoyl-L-alanyl-D-glutamate + meso-2,6-diaminopimelate + ATP = UDP-N-acetyl-alpha-D-muramoyl-L-alanyl-gamma-D-glutamyl-meso-2,6-diaminopimelate + ADP + phosphate + H(+). Its pathway is cell wall biogenesis; peptidoglycan biosynthesis. Functionally, catalyzes the addition of meso-diaminopimelic acid to the nucleotide precursor UDP-N-acetylmuramoyl-L-alanyl-D-glutamate (UMAG) in the biosynthesis of bacterial cell-wall peptidoglycan. The polypeptide is UDP-N-acetylmuramoyl-L-alanyl-D-glutamate--2,6-diaminopimelate ligase (Thermosynechococcus vestitus (strain NIES-2133 / IAM M-273 / BP-1)).